The primary structure comprises 104 residues: Cell division protein FtsL (104 aa).

At 1 to 19 (MSTPNTHLLCLIATDLRKH) the chain is on the cytoplasmic side. Residues 20–39 (FFAVLVGMLIVCSAIYNVYT) form a helical membrane-spanning segment. Residues 40-104 (THKTRGLVTQ…KKNSVLVELR (65 aa)) lie on the Periplasmic side of the membrane.

Belongs to the FtsL family. In terms of assembly, part of a complex composed of FtsB, FtsL and FtsQ.

The protein localises to the cell inner membrane. Its function is as follows. Essential cell division protein. May link together the upstream cell division proteins, which are predominantly cytoplasmic, with the downstream cell division proteins, which are predominantly periplasmic. In Psychromonas ingrahamii (strain DSM 17664 / CCUG 51855 / 37), this protein is Cell division protein FtsL.